Consider the following 249-residue polypeptide: Domoic acid biosynthesis cluster protein B (249 aa).

Unknown function: part of the gene cluster that mediates the biosynthesis of domoic acid (DA) and derivatives, natural products with neurochemical activity acting as ionotropic glutamate receptor (iGluR) agonists, thus being neurotoxins causing amnesic shellfish poisoning (ASP). The polypeptide is Domoic acid biosynthesis cluster protein B (Pseudo-nitzschia multiseries (Marine planktonic diatom)).